The primary structure comprises 480 residues: Glycerol-3-phosphate transporter (480 aa).

The Cytoplasmic portion of the chain corresponds to 1 to 36 (MFGPFKPAPHIAELPAEKIDSTYKRLRWQVFAGIFF). Residues 37-57 (GYAAYYFVRANFDLAQPGLIQ) traverse the membrane as a helical segment. Residues 58 to 64 (AGLYSKA) lie on the Periplasmic side of the membrane. Residues 65–85 (ELGVIGSAAGLAYGLSKFVMA) form a helical membrane-spanning segment. The Cytoplasmic segment spans residues 86–94 (GMSDRSNPR). A helical membrane pass occupies residues 95–113 (VFLPFGLLLSGLCMTLMGL). Over 114-121 (FPWATSGI) the chain is Periplasmic. Residues 122 to 142 (AIMWVMIFLNGWFQGMGWPPC) form a helical membrane-spanning segment. The Cytoplasmic segment spans residues 143 to 161 (GRTMVHWWSKSERGTIVSI). A helical transmembrane segment spans residues 162 to 181 (WNTAHNIGGMVPGAMVLLAS). Residues 182–201 (AIFFSTHGIEAQAKDVWQQS) are Periplasmic-facing. The chain crosses the membrane as a helical span at residues 202–219 (LYFPGIAAMIFAIPVYFV). Over 220-274 (MRDTPQSCGLPSIEKWRNDYPDDYNEKTYENDLTAKEIFVTYVLKNKLLWYIAIA) the chain is Cytoplasmic. A helical transmembrane segment spans residues 275–295 (NVFVYLIRYGVLKWSPVYLSE). The Periplasmic portion of the chain corresponds to 296-300 (VKHFN). The chain crosses the membrane as a helical span at residues 301–321 (IKGTAWAYTIYELAAVPGTLL). The Cytoplasmic portion of the chain corresponds to 322–334 (CGWVSDKVFKGKR). The chain crosses the membrane as a helical span at residues 335–354 (GLTGFIFMILTTAAVVAYWM). Topologically, residues 355-359 (NPATP) are periplasmic. The helical transmembrane segment at 360 to 396 (EAELANYSAWYENPYQLTDFVLMTLIGFLIYGPVMLI) threads the bilayer. Over 397 to 415 (GLHALELAPKKAAGTAAGF) the chain is Cytoplasmic. A helical membrane pass occupies residues 416–437 (TGLFGYLGGTVSASAVIGWAAQ). Residues 438 to 442 (HYGWD) lie on the Periplasmic side of the membrane. The helical transmembrane segment at 443–463 (GGFYVMIGGGVLAVLLLLIVM) threads the bilayer. At 464–479 (VEEGKHKAKLGDTYGT) the chain is on the cytoplasmic side.

This sequence belongs to the major facilitator superfamily. Organophosphate:Pi antiporter (OPA) (TC 2.A.1.4) family.

It localises to the cell inner membrane. Its function is as follows. Responsible for glycerol-3-phosphate uptake. The protein is Glycerol-3-phosphate transporter (glpT) of Haemophilus influenzae (strain ATCC 51907 / DSM 11121 / KW20 / Rd).